The sequence spans 359 residues: Adenosine 3'-phospho 5'-phosphosulfate transporter 1 (359 aa).

7 consecutive transmembrane segments (helical) span residues 26–46 (NMKLALATGGIMGSFLLYGIL), 68–88 (STFLVLSNRVFAALMAIVIVL), 157–177 (YSIALTITTGCMIFFLTGKIS), 184–204 (TSYGIILMALYMFFDSFTSTF), 228–248 (SIISVFILILNGRLFPAIEFI), 254–276 (VFFDSTMLSASAGLGQMVIYYTI), and 300–320 (TLIYLHPLSNTQWIGALLVFG). The tract at residues 332–359 (KKHGGHSHGGSNAATTTTPSNNSNNTEK) is disordered. Over residues 340 to 359 (GGSNAATTTTPSNNSNNTEK) the composition is skewed to low complexity.

This sequence belongs to the nucleotide-sugar transporter family. SLC35B subfamily.

It localises to the golgi apparatus membrane. The catalysed reaction is 3'-phosphoadenylyl sulfate(in) + adenosine 3',5'-bisphosphate(out) = 3'-phosphoadenylyl sulfate(out) + adenosine 3',5'-bisphosphate(in). Probably functions as a 3'-phosphoadenylyl sulfate:adenosine 3',5'-bisphosphate antiporter at the Golgi membranes. Mediates the transport from the cytosol into the lumen of the Golgi of 3'-phosphoadenylyl sulfate/adenosine 3'-phospho 5'-phosphosulfate (PAPS), a universal sulfuryl donor for sulfation events that take place in that compartment. This Dictyostelium discoideum (Social amoeba) protein is Adenosine 3'-phospho 5'-phosphosulfate transporter 1 (slc35b2).